The following is a 425-amino-acid chain: MLDIKWIREYPEKLDEALAKRGIEPQAERLIKLDLERRSHVAKVQSAQERRNAASKEIGQALAACDQTMAEHLRAEVEEIKVFLSSATTEEKRLTENFERALSTLPNIPLDDVSVGKDGSDNVVIRHFGTPAMFDFTPKEHFDLGQNLKQMDFERASRLSGTRFTVLSGALARLERALGQFMLDVHVDEHGYTEVSVPLLVRDEIVYGAAQLPKFADDLFRTTDGRWLISTAEVPLTNLVNNEILEISDLPLRFSSLTPCFRSEAGSAGRDTRGMLRQHQFWKVEMVSITTEEQSLMELERMTECAEDVLKRLGLPFRTVVLSTGDMGFAARKTYDIEVWLPGQGCYREISSCSVCGDFQGRRMNARYRKEGDKTLKFVHSLNGSGTAVGRCLIAILENYQQADGSIIIPDVLQPYVKGMRCITA.

231–233 (TAE) serves as a coordination point for L-serine. 262-264 (RSE) is an ATP binding site. Glutamate 285 is an L-serine binding site. 349–352 (EISS) contributes to the ATP binding site. Serine 385 contacts L-serine.

The protein belongs to the class-II aminoacyl-tRNA synthetase family. Type-1 seryl-tRNA synthetase subfamily. Homodimer. The tRNA molecule binds across the dimer.

It is found in the cytoplasm. The catalysed reaction is tRNA(Ser) + L-serine + ATP = L-seryl-tRNA(Ser) + AMP + diphosphate + H(+). The enzyme catalyses tRNA(Sec) + L-serine + ATP = L-seryl-tRNA(Sec) + AMP + diphosphate + H(+). Its pathway is aminoacyl-tRNA biosynthesis; selenocysteinyl-tRNA(Sec) biosynthesis; L-seryl-tRNA(Sec) from L-serine and tRNA(Sec): step 1/1. Functionally, catalyzes the attachment of serine to tRNA(Ser). Is also able to aminoacylate tRNA(Sec) with serine, to form the misacylated tRNA L-seryl-tRNA(Sec), which will be further converted into selenocysteinyl-tRNA(Sec). In Bartonella quintana (strain Toulouse) (Rochalimaea quintana), this protein is Serine--tRNA ligase.